The following is an 817-amino-acid chain: Leucine--tRNA ligase (817 aa).

Positions 42–52 match the 'HIGH' region motif; that stretch reads PYPSGRLHMGH. The short motif at 576–580 is the 'KMSKS' region element; sequence KMSKS. Lys579 contributes to the ATP binding site.

The protein belongs to the class-I aminoacyl-tRNA synthetase family.

The protein resides in the cytoplasm. It catalyses the reaction tRNA(Leu) + L-leucine + ATP = L-leucyl-tRNA(Leu) + AMP + diphosphate. In Halorhodospira halophila (strain DSM 244 / SL1) (Ectothiorhodospira halophila (strain DSM 244 / SL1)), this protein is Leucine--tRNA ligase.